The chain runs to 94 residues: Antitoxin HipB (94 aa).

The HTH cro/C1-type domain occupies 23–77 (MKLVRQQNGWTQSELAKKIGIKQATISNFENNPDNTSLTTFFKILQSLELSMTLC). The H-T-H motif DNA-binding region spans 34–53 (QSELAKKIGIKQATISNFEN).

In terms of assembly, homodimer. Forms a HipA(2)HipB(2) heterotetramer which can interact with DNA. This complex also blocks the toxic activity of HipA.

Its function is as follows. Antitoxin component of a type II type II toxin-antitoxin (TA) system. Neutralizes the toxic effect of cognate toxin HipA. Represses the hipBA operon promoter. This is Antitoxin HipB (hipB) from Escherichia coli O6:H1 (strain CFT073 / ATCC 700928 / UPEC).